The sequence spans 77 residues: MASSSKCAFLVFLCMIVLLAPSEVHAKSMAKAQGGWYLVEGLCSKFPDCNKHCKEQGFLGGQCLKLGVNMLCFCIHT.

Positions 1–26 are cleaved as a signal peptide; sequence MASSSKCAFLVFLCMIVLLAPSEVHA. Disulfide bonds link Cys-43/Cys-63, Cys-49/Cys-72, and Cys-53/Cys-74.

Belongs to the DEFL family.

It is found in the secreted. The polypeptide is Putative defensin-like protein 30 (Arabidopsis thaliana (Mouse-ear cress)).